The primary structure comprises 420 residues: Protein translocase subunit SecF (420 aa).

A run of 6 helical transmembrane segments spans residues 7 to 27 (FSLL…AGVL), 250 to 270 (LLVR…FLYV), 276 to 296 (WFFA…MVSF), 309 to 327 (IAAI…VVVF), 358 to 378 (VVTT…TEGG), and 388 to 408 (VGMV…IALI).

It belongs to the SecD/SecF family. SecF subfamily. Forms a complex with SecD. Part of the essential Sec protein translocation apparatus which comprises SecA, SecYEG and auxiliary proteins SecDF. Other proteins may also be involved.

It localises to the cell inner membrane. In terms of biological role, part of the Sec protein translocase complex. Interacts with the SecYEG preprotein conducting channel. SecDF uses the proton motive force (PMF) to complete protein translocation after the ATP-dependent function of SecA. The polypeptide is Protein translocase subunit SecF (Treponema pallidum (strain Nichols)).